Consider the following 479-residue polypeptide: Inhibitory synaptic factor 2A (479 aa).

Ser177 is subject to Phosphoserine. 2 disordered regions span residues 226–247 (GRAK…ALRR) and 315–338 (SPEC…PSPT). The span at 228 to 237 (AKQDRGRPNS) shows a compositional bias: basic and acidic residues. A compositionally biased stretch (polar residues) spans 318 to 337 (CSEQPSQTHTPPGLGNQPSP). A coiled-coil region spans residues 353 to 379 (TEVVDLKAQLQMMENLISSSQETIKVL). The span at 449 to 461 (SPYSQETYSSTPK) shows a compositional bias: polar residues. The tract at residues 449 to 472 (SPYSQETYSSTPKQKSKTESKKHG) is disordered.

The protein belongs to the INSYN2 family. As to quaternary structure, interacts with GPHN.

The protein localises to the postsynaptic density. Its function is as follows. Component of the protein machinery at the inhibitory synapses, probably acting as a scaffold. Inhibitory synapses dampen neuronal activity through postsynaptic hyperpolarization. This synaptic inhibition is fundamental for the functioning of the central nervous system, shaping and orchestrating the flow of information through neuronal networks to generate a precise neural code. In Homo sapiens (Human), this protein is Inhibitory synaptic factor 2A.